The sequence spans 640 residues: Chaperone protein DnaK (640 aa).

T201 carries the post-translational modification Phosphothreonine; by autocatalysis. A compositionally biased stretch (low complexity) spans 603–621 (AASADQGGAPGADAGNAGK). Residues 603-625 (AASADQGGAPGADAGNAGKAQDD) are disordered.

This sequence belongs to the heat shock protein 70 family.

In terms of biological role, acts as a chaperone. The chain is Chaperone protein DnaK from Stenotrophomonas maltophilia (strain K279a).